The sequence spans 201 residues: Large ribosomal subunit protein bL25 (201 aa).

This sequence belongs to the bacterial ribosomal protein bL25 family. CTC subfamily. In terms of assembly, part of the 50S ribosomal subunit; part of the 5S rRNA/L5/L18/L25 subcomplex. Contacts the 5S rRNA. Binds to the 5S rRNA independently of L5 and L18.

In terms of biological role, this is one of the proteins that binds to the 5S RNA in the ribosome where it forms part of the central protuberance. This Burkholderia multivorans (strain ATCC 17616 / 249) protein is Large ribosomal subunit protein bL25.